Here is a 449-residue protein sequence, read N- to C-terminus: Tubulin alpha-2 chain (449 aa).

Glutamine 11 provides a ligand contact to GTP. Lysine 40 bears the N6-acetyllysine mark. The GTP site is built by glutamate 71, serine 140, glycine 144, threonine 145, threonine 179, asparagine 206, and asparagine 228. Residue glutamate 71 participates in Mg(2+) binding. Residue glutamate 254 is part of the active site.

This sequence belongs to the tubulin family. Dimer of alpha and beta chains. A typical microtubule is a hollow water-filled tube with an outer diameter of 25 nm and an inner diameter of 15 nM. Alpha-beta heterodimers associate head-to-tail to form protofilaments running lengthwise along the microtubule wall with the beta-tubulin subunit facing the microtubule plus end conferring a structural polarity. Microtubules usually have 13 protofilaments but different protofilament numbers can be found in some organisms and specialized cells. Requires Mg(2+) as cofactor. Post-translationally, undergoes a tyrosination/detyrosination cycle, the cyclic removal and re-addition of a C-terminal tyrosine residue by the enzymes tubulin tyrosine carboxypeptidase (TTCP) and tubulin tyrosine ligase (TTL), respectively. In terms of processing, acetylation of alpha chains at Lys-40 stabilizes microtubules and affects affinity and processivity of microtubule motors. This modification has a role in multiple cellular functions, ranging from cell motility, cell cycle progression or cell differentiation to intracellular trafficking and signaling. During the early stages of oogenesis lky/Alpha-tubulin N-acetyltransferase 2 is the main acetyltransferase responsible for Lys-40 acetylation in germline cells while Atat/alpha-tubulin N-acetyltransferase 1 is the main acetyltransferase responsible for Lys-40 acetylation in somatic cells.

The protein localises to the cytoplasm. It localises to the cytoskeleton. It catalyses the reaction GTP + H2O = GDP + phosphate + H(+). Its function is as follows. Tubulin is the major constituent of microtubules, a cylinder consisting of laterally associated linear protofilaments composed of alpha- and beta-tubulin heterodimers. Microtubules grow by the addition of GTP-tubulin dimers to the microtubule end, where a stabilizing cap forms. Below the cap, tubulin dimers are in GDP-bound state, owing to GTPase activity of alpha-tubulin. This Drosophila melanogaster (Fruit fly) protein is Tubulin alpha-2 chain (alphaTub85E).